Consider the following 362-residue polypeptide: 3-dehydroquinate synthase (362 aa).

NAD(+)-binding positions include 74–79, 108–112, 132–133, Lys145, Lys154, and 172–175; these read DGEGYK, GVIGD, TT, and TLDT. Zn(2+) is bound by residues Glu187, His250, and His267.

The protein belongs to the sugar phosphate cyclases superfamily. Dehydroquinate synthase family. Co(2+) serves as cofactor. The cofactor is Zn(2+). NAD(+) is required as a cofactor.

It is found in the cytoplasm. The catalysed reaction is 7-phospho-2-dehydro-3-deoxy-D-arabino-heptonate = 3-dehydroquinate + phosphate. Its pathway is metabolic intermediate biosynthesis; chorismate biosynthesis; chorismate from D-erythrose 4-phosphate and phosphoenolpyruvate: step 2/7. In terms of biological role, catalyzes the conversion of 3-deoxy-D-arabino-heptulosonate 7-phosphate (DAHP) to dehydroquinate (DHQ). In Citrifermentans bemidjiense (strain ATCC BAA-1014 / DSM 16622 / JCM 12645 / Bem) (Geobacter bemidjiensis), this protein is 3-dehydroquinate synthase.